Reading from the N-terminus, the 457-residue chain is Zinc finger protein ZIPIC (457 aa).

In terms of domain architecture, ZAD spans 3 to 84 (CCICQFSVRV…ILELIHSPYM (82 aa)). 6 C2H2-type zinc fingers span residues 257–280 (IQCPSCPEKFSSRRAYNVHTKREH), 284–306 (YVCDQCGKTLQSYSGFIGHLQNH), 312–334 (FACPVCPERFSRKFRLKHHMAWH), 340–362 (YQCDVCSKRFVHKVALYKHKMIH), 369–391 (LECQVCGFKTRTKAHLERHMRSH), and 397–419 (FACPVCNKRFSQMYNMKAHLREH). The C2H2-type 7; degenerate zinc finger occupies 430–448 (FHCSKCTHTFINEQNYDAH).

In terms of assembly, interacts (via region between the ZAD domain and the first zinc finger domain) with Cp190 (via centrosomal targeting M domain); the interaction is direct. Interacts with pita.

It localises to the nucleus. The protein localises to the chromosome. Its function is as follows. Insulator DNA-binding protein. Recruits Cp190 and cooperatively binds to chromatin promoter regions to exert transcriptional regulator and chromatin insulator functions. Chromatin insulators are regulatory elements that establish independent domains of transcriptional activity within eukaryotic genomes. Insulators are proposed to structure the chromatin fiber into independent domains of differing transcriptional potential by promoting the formation of distinct chromatin loops to form topologically associating domains (TADs). Chromatin binding sites often cluster with those of other insulator DNA-binding proteins such as pita, CTCF and BEAF-32, but not Su(Hw). This Drosophila melanogaster (Fruit fly) protein is Zinc finger protein ZIPIC.